Consider the following 1226-residue polypeptide: Methionine synthase (1226 aa).

The Hcy-binding domain occupies 6 to 326 (RAQIEAQLKQ…EHIRHMAMAV (321 aa)). Positions 248, 311, and 312 each coordinate Zn(2+). A Pterin-binding domain is found at 357 to 618 (FVNVGERTNV…VPEKLREAVE (262 aa)). Residues 651–745 (SALEWRTWSV…FINASKQAGS (95 aa)) form the B12-binding N-terminal domain. Residues Glu-695, 757–761 (GDVHD), His-760, Ser-805, Thr-809, and Ala-861 contribute to the methylcob(III)alamin site. Residues 747-882 (NGKILLATVK…SDELRPAFVE (136 aa)) enclose the B12-binding domain. An AdoMet activation domain is found at 898–1226 (KKPRTKPVTL…EKWLGPNING (329 aa)). S-adenosyl-L-methionine is bound by residues Asp-948, Arg-1136, and 1191–1192 (YF).

It belongs to the vitamin-B12 dependent methionine synthase family. Methylcob(III)alamin serves as cofactor. Requires Zn(2+) as cofactor.

The catalysed reaction is (6S)-5-methyl-5,6,7,8-tetrahydrofolate + L-homocysteine = (6S)-5,6,7,8-tetrahydrofolate + L-methionine. Its pathway is amino-acid biosynthesis; L-methionine biosynthesis via de novo pathway; L-methionine from L-homocysteine (MetH route): step 1/1. In terms of biological role, catalyzes the transfer of a methyl group from methyl-cobalamin to homocysteine, yielding enzyme-bound cob(I)alamin and methionine. Subsequently, remethylates the cofactor using methyltetrahydrofolate. The polypeptide is Methionine synthase (metH) (Vibrio vulnificus (strain CMCP6)).